The following is a 1616-amino-acid chain: Protein P200 (1616 aa).

Disordered regions lie at residues 1-41 (MPKT…DKVE), 878-909 (HFQPDVQPEQTPQEAKFDSPVEIPQESSQAEF), 931-975 (QQLE…LDQN), 1004-1083 (DNVE…EPVD), 1100-1132 (FDKNQTQTEGLEEPQVSSEAEVVDQTTTDTVGE), and 1159-1433 (ISEP…SEEE). The segment at 891-1389 (EAKFDSPVEI…QEAKFDSPVE (499 aa)) is 2 X 26 AA repeats. Positions 938-952 (EETVVTPTEVTAFEP) are enriched in low complexity. Composition is skewed to basic and acidic residues over residues 1012–1029 (QPKETEAEITFDETKELQ) and 1059–1081 (VFEKPQLETQTEKILEEEPKSEP). A run of 2 repeats spans residues 1161 to 1186 (EPQVEQQPGEAVFEPSAEAKFDSPVE) and 1205 to 1236 (EIQPVESQPEATFDTVQPEQTPQEAKFDSPVE). 2 stretches are compositionally biased toward polar residues: residues 1200 to 1227 (VQTQPEIQPVESQPEATFDTVQPEQTPQ) and 1242 to 1251 (EFSSEPTQQH). Residues 1205-1389 (EIQPVESQPE…QEAKFDSPVE (185 aa)) form a 2 X 32 AA repeats region. Over residues 1256 to 1270 (ASFDEPNYDFDEPNY) the composition is skewed to acidic residues. The span at 1276–1285 (SYDSDLQPSE) shows a compositional bias: polar residues. The span at 1288 to 1302 (YDVDEPNYDFDEPNY) shows a compositional bias: acidic residues. The span at 1309–1323 (SEPQFEPQVEQQPGE) shows a compositional bias: low complexity. Repeat copies occupy residues 1310–1339 (EPQFEPQVEQQPGEAVFEPSAEAKFDSPVE) and 1358–1389 (EIQPVESQPEATFDTVQPEQTPQEAKFDSPVE). The segment covering 1353–1380 (VQTQPEIQPVESQPEATFDTVQPEQTPQ) has biased composition (polar residues). Residues 1392–1406 (QEPQVSSEPEVVVQP) are compositionally biased toward low complexity. Positions 1416-1433 (VLEEPQADEIQPEASEEE) are enriched in acidic residues.

Functionally, could be an accessory structural component in cytadherence. In Mycoplasma genitalium (strain ATCC 33530 / DSM 19775 / NCTC 10195 / G37) (Mycoplasmoides genitalium), this protein is Protein P200.